Reading from the N-terminus, the 349-residue chain is Transcription factor HBP-1a (349 aa).

Positions 1–11 (MGSNDPSTPSK) are enriched in polar residues. Disordered stretches follow at residues 1–39 (MGSN…WPGF), 101–196 (FHYP…NKPM), 224–277 (GATG…QAEC), and 312–349 (NTSL…QKEP). Residues 113-124 (PAGAQGAAPGAA) show a composition bias toward low complexity. The span at 174-191 (NENGSAQNGVSHSSSHGT) shows a compositional bias: polar residues. Residues 252–315 (ELKKQKRKLS…EELLSKNTSL (64 aa)) enclose the bZIP domain. The tract at residues 254-273 (KKQKRKLSNRESARRSRLRK) is basic motif. Residues 261 to 277 (SNRESARRSRLRKQAEC) show a composition bias toward basic and acidic residues. The interval 280–315 (LGQRAEALKSENSSLRIELDRIKKEYEELLSKNTSL) is leucine-zipper. Positions 334-349 (MNERGDTNGGSHQKEP) are enriched in basic and acidic residues.

The protein belongs to the bZIP family. As to quaternary structure, binds DNA as a dimer.

It is found in the nucleus. Its function is as follows. Binds to the hexamer motif 5'-ACGTCA-3' of histone gene promoters. This is Transcription factor HBP-1a from Triticum aestivum (Wheat).